Here is a 230-residue protein sequence, read N- to C-terminus: Orotidine 5'-phosphate decarboxylase (230 aa).

Substrate-binding positions include Asp10, Lys32, 59 to 68 (DLKYHDIPNT), Thr119, Arg180, Gln189, Gly209, and Arg210. Lys61 acts as the Proton donor in catalysis.

This sequence belongs to the OMP decarboxylase family. Type 1 subfamily. In terms of assembly, homodimer.

It catalyses the reaction orotidine 5'-phosphate + H(+) = UMP + CO2. It participates in pyrimidine metabolism; UMP biosynthesis via de novo pathway; UMP from orotate: step 2/2. In terms of biological role, catalyzes the decarboxylation of orotidine 5'-monophosphate (OMP) to uridine 5'-monophosphate (UMP). The protein is Orotidine 5'-phosphate decarboxylase of Haemophilus influenzae (strain PittEE).